A 493-amino-acid chain; its full sequence is Putative BTB/POZ domain-containing protein L35 (493 aa).

The region spanning 16-87 (TDLKLTLVDD…YLVDNKSEVD (72 aa)) is the BTB domain.

The protein belongs to the mimivirus BTB/WD family.

This Acanthamoeba polyphaga (Amoeba) protein is Putative BTB/POZ domain-containing protein L35.